The sequence spans 711 residues: Interferon-induced GTP-binding protein Mx2 (711 aa).

Residues 115–387 form the Dynamin-type G domain; it reads DLALPAIAVI…LILHINKSLP (273 aa). A G1 motif region spans residues 125–132; sequence GDQSSGKS. Position 125-132 (125-132) interacts with GTP; that stretch reads GDQSSGKS. Positions 150 to 152 are G2 motif; that stretch reads VTR. The interval 225-228 is G3 motif; the sequence is DLPG. Residues 225-229 and 294-297 each bind GTP; these read DLPGI and TKPD. Residues 294–297 form a G4 motif region; the sequence is TKPD. A G5 motif region spans residues 326–329; that stretch reads RCRG. Positions 623–711 constitute a GED domain; the sequence is NDEIGVHLNA…ARRALYMFFS (89 aa).

This sequence belongs to the TRAFAC class dynamin-like GTPase superfamily. Dynamin/Fzo/YdjA family.

The protein localises to the cytoplasm. It is found in the nucleus. Functionally, interferon-induced dynamin-like GTPase with antiviral activity against vesicular stomatitis virus (VSV). The protein is Interferon-induced GTP-binding protein Mx2 (MX2) of Canis lupus familiaris (Dog).